Consider the following 329-residue polypeptide: Carrier protein YMC2, mitochondrial (329 aa).

Residues 1–27 are disordered; sequence MSEEFPTPQLLDELEDQQKVTTPNEKR. Residues 1–33 constitute a mitochondrion transit peptide; the sequence is MSEEFPTPQLLDELEDQQKVTTPNEKRELSSNR. Solcar repeat units lie at residues 34 to 115, 143 to 226, and 238 to 325; these read VLKD…MKRF, SQYY…LVAR, and PPWK…VMRF. 6 helical membrane-spanning segments follow: residues 38 to 58, 84 to 104, 140 to 160, 205 to 225, 243 to 263, and 297 to 318; these read IFAGTIGGIAQVLVGQPFDTT, VFAFYKGALTPLLGVGICVSV, LPLSQYYVCGLTGGVVNSFLA, TMIRAGHGLGTYFLVYEALVA, CLFGAFSGTMLWLTVYPLDVV, and FFKGFGPTMVRSAPVNGATFLT.

This sequence belongs to the mitochondrial carrier (TC 2.A.29) family.

It is found in the mitochondrion inner membrane. This Saccharomyces cerevisiae (strain ATCC 204508 / S288c) (Baker's yeast) protein is Carrier protein YMC2, mitochondrial (YMC2).